Consider the following 338-residue polypeptide: tRNA N6-adenosine threonylcarbamoyltransferase (338 aa).

His111 and His115 together coordinate Fe cation. Substrate-binding positions include 134-138 (LVSGG), Asp167, Gly180, and Asn272. A Fe cation-binding site is contributed by Asp300.

The protein belongs to the KAE1 / TsaD family. Requires Fe(2+) as cofactor.

The protein localises to the cytoplasm. It catalyses the reaction L-threonylcarbamoyladenylate + adenosine(37) in tRNA = N(6)-L-threonylcarbamoyladenosine(37) in tRNA + AMP + H(+). Functionally, required for the formation of a threonylcarbamoyl group on adenosine at position 37 (t(6)A37) in tRNAs that read codons beginning with adenine. Is involved in the transfer of the threonylcarbamoyl moiety of threonylcarbamoyl-AMP (TC-AMP) to the N6 group of A37, together with TsaE and TsaB. TsaD likely plays a direct catalytic role in this reaction. In Shewanella oneidensis (strain ATCC 700550 / JCM 31522 / CIP 106686 / LMG 19005 / NCIMB 14063 / MR-1), this protein is tRNA N6-adenosine threonylcarbamoyltransferase.